Consider the following 1239-residue polypeptide: Anion exchange protein 2 (1239 aa).

Positions 1 to 237 are disordered; sequence MSSAPRRPAK…HRSYNLQERR (237 aa). Over 1–706 the chain is Cytoplasmic; it reads MSSAPRRPAK…DFRDALDPQC (706 aa). Basic and acidic residues-rich tracts occupy residues 37–49 and 58–75; these read ELHRTLGVERFEE and GGEEPGRSYGEEDFEYHR. Composition is skewed to basic residues over residues 76-85 and 94-110; these read QSSHHIHHPL and RRRKTPQGPGRKPRRRP. Ser113, Ser132, Ser144, Ser170, and Ser172 each carry phosphoserine. Acidic residues predominate over residues 120 to 133; sequence TIEEGEEDEDEASE. Over residues 141 to 155 the composition is skewed to low complexity; it reads TQPSPVSTPSSVQFF. Low complexity predominate over residues 189–207; sequence GAQAGTQVEEAEAVAVASG. Gly residues predominate over residues 208–217; sequence TAGGDDGGAS. Position 241 is a phosphoserine (Ser241). Thr255 is subject to Phosphothreonine. At Lys272 the chain carries N6-methyllysine. The disordered stretch occupies residues 285–318; it reads HLVRKNAKGSTQSGREGREPGPTPRARPRAPHKP. Ser441 is modified (phosphoserine). The segment at 447 to 468 is disordered; the sequence is SLLGHHHGQGAESDPHVTEPLI. 2 membrane (anion exchange) regions span residues 706–1239 and 708–1239; these read CLAA…PMPV and AAVI…PMPV. The next 4 helical transmembrane spans lie at 707-727, 752-772, 794-814, and 824-844; these read LAAVIFIYFAALSPAITFGGL, FCLLGAQPLLVIGFSGPLLVF, IGFWLVLLALLMVALEGSFLV, and IFAFLISLIFIYETFYKLVKI. At 845–895 the chain is on the extracellular side; the sequence is FQEHPLHGCSASNSSEVDGGENMTWAVARPTLGPGNRSLAGQSGQGKPRGQ. N-linked (GlcNAc...) asparagine glycans are attached at residues Asn857, Asn866, and Asn880. The chain crosses the membrane as a helical span at residues 896 to 916; it reads PNTALLSLVLMAGTFFIAFFL. Over 917-931 the chain is Cytoplasmic; sequence RKFKNSRFFPGRIRR. Transmembrane regions (helical) follow at residues 932–952, 987–1007, 1034–1054, 1088–1108, and 1111–1131; these read VIGDFGVPIAILIMVLVDYSI, FPVWMMVASLLPAILVFILIF, LLLIVAMGGICALFGLPWLAA, RVTGLLVALLVGLSIVIGDLL, and IPLAVLFGIFLYMGVTSLNGI. The S-palmitoyl cysteine moiety is linked to residue Cys1171. The chain crosses the membrane as a helical span at residues 1172–1192; the sequence is LALLWAVMSTAASLAFPFILI.

It belongs to the anion exchanger (TC 2.A.31) family.

It is found in the apical cell membrane. It localises to the basolateral cell membrane. The enzyme catalyses hydrogencarbonate(in) + chloride(out) = hydrogencarbonate(out) + chloride(in). Functionally, sodium-independent anion exchanger which mediates the electroneutral exchange of chloride for bicarbonate ions across the cell membrane. Plays an important role in osteoclast differentiation and function. Regulates bone resorption and calpain-dependent actin cytoskeleton organization in osteoclasts via anion exchange-dependent control of pH. Essential for intracellular pH regulation in CD8(+) T-cells upon CD3 stimulation, modulating CD8(+) T-cell response. In Pongo abelii (Sumatran orangutan), this protein is Anion exchange protein 2 (SLC4A2).